Reading from the N-terminus, the 170-residue chain is MDLRKFIRDIPDFPFEGIIFRDVTPLLKNPQAFQAAIDKMAETVSDIDFDLIVAPEARGFIFGSALAYKLHKGFIPVRKPGKLPYETTSIEYDLEYGTAKLQIHSDAIDKGEKILLVDDVLATGGTANAIAQLVKKLGGEVAGTCFLVELTYLNPRERLRDYLIRTVISY.

It belongs to the purine/pyrimidine phosphoribosyltransferase family. As to quaternary structure, homodimer.

It is found in the cytoplasm. It catalyses the reaction AMP + diphosphate = 5-phospho-alpha-D-ribose 1-diphosphate + adenine. It functions in the pathway purine metabolism; AMP biosynthesis via salvage pathway; AMP from adenine: step 1/1. Functionally, catalyzes a salvage reaction resulting in the formation of AMP, that is energically less costly than de novo synthesis. This chain is Adenine phosphoribosyltransferase, found in Pseudothermotoga lettingae (strain ATCC BAA-301 / DSM 14385 / NBRC 107922 / TMO) (Thermotoga lettingae).